The following is a 192-amino-acid chain: Peroxiredoxin tpx1 (192 aa).

A Thioredoxin domain is found at 3-161 (LQIGKPAPDF…ALRLLDAFQF (159 aa)). Cysteine 48 serves as the catalytic Cysteine sulfenic acid (-SOH) intermediate. Phosphoserine is present on residues serine 105 and serine 148.

The protein belongs to the peroxiredoxin family. AhpC/Prx1 subfamily. In terms of assembly, homodimer; disulfide-linked, upon oxidation. Interacts with srx1 in response to oxidative stress. Interacts with pap1 via transient disulfide linkages. The enzyme can be inactivated by further oxidation of the cysteine sulfenic acid (C(P)-SOH) to sulphinic acid (C(P)-SO2H) instead of its condensation to a disulfide bond. It can be reactivated by forming a transient disulfide bond with sulfiredoxin srx1, which reduces the cysteine sulfinic acid in an ATP- and Mg-dependent manner.

The protein resides in the cytoplasm. It localises to the nucleus. The enzyme catalyses a hydroperoxide + [thioredoxin]-dithiol = an alcohol + [thioredoxin]-disulfide + H2O. Thiol-specific peroxidase that catalyzes the reduction of hydrogen peroxide and organic hydroperoxides to water and alcohols, respectively. Plays a role in cell protection against oxidative stress by detoxifying peroxides and as sensor of hydrogen peroxide-mediated signaling events. Relays hydrogen peroxide as a signal to the transcription factor pap1 by inducing the formation of intramolecular disulfide bonds in pap1, which causes its nuclear accumulation and activation. Reduced by srx1 and this regulation acts as a molecular switch controlling the transcriptional response to hydrogen peroxide. The chain is Peroxiredoxin tpx1 (tpx1) from Schizosaccharomyces pombe (strain 972 / ATCC 24843) (Fission yeast).